We begin with the raw amino-acid sequence, 302 residues long: MNLFSPKEVSQLLKRYEIHPKKSLGQNFLVDGNIIQKIIAAAELKEQDIVLEIGPGLGTLTRDMSFYVNEIFAIELDQRMIDILQETVGSCDNVNIIHNDALKLDYQELISDFIEFSPAQLQCKSKQINPKNLKAVSNLPYYIASPLVLKLAKEKVPLSVMVLMVQREVADRFTASPGSKNYGAVTVLLDCFYEVEGVFNVPKTVFYPQPRVESQVVKLTKRSEAKINDDYQEDFIKFVNQAFNSRRKTLVNNILSIFTGEKSELSQILENNGFSAGIRGEQLTVDEFAQIFKIIYNRIKYS.

Residues asparagine 27, leucine 29, glycine 54, glutamate 75, aspartate 100, and asparagine 138 each coordinate S-adenosyl-L-methionine.

Belongs to the class I-like SAM-binding methyltransferase superfamily. rRNA adenine N(6)-methyltransferase family. RsmA subfamily.

The protein resides in the cytoplasm. The enzyme catalyses adenosine(1518)/adenosine(1519) in 16S rRNA + 4 S-adenosyl-L-methionine = N(6)-dimethyladenosine(1518)/N(6)-dimethyladenosine(1519) in 16S rRNA + 4 S-adenosyl-L-homocysteine + 4 H(+). Specifically dimethylates two adjacent adenosines (A1518 and A1519) in the loop of a conserved hairpin near the 3'-end of 16S rRNA in the 30S particle. May play a critical role in biogenesis of 30S subunits. This is Ribosomal RNA small subunit methyltransferase A from Natranaerobius thermophilus (strain ATCC BAA-1301 / DSM 18059 / JW/NM-WN-LF).